The primary structure comprises 285 residues: Bifunctional protein FolD (285 aa).

NADP(+) is bound by residues 166-168 (GRS), Ser-191, and Thr-232.

The protein belongs to the tetrahydrofolate dehydrogenase/cyclohydrolase family. In terms of assembly, homodimer.

The enzyme catalyses (6R)-5,10-methylene-5,6,7,8-tetrahydrofolate + NADP(+) = (6R)-5,10-methenyltetrahydrofolate + NADPH. It catalyses the reaction (6R)-5,10-methenyltetrahydrofolate + H2O = (6R)-10-formyltetrahydrofolate + H(+). It functions in the pathway one-carbon metabolism; tetrahydrofolate interconversion. In terms of biological role, catalyzes the oxidation of 5,10-methylenetetrahydrofolate to 5,10-methenyltetrahydrofolate and then the hydrolysis of 5,10-methenyltetrahydrofolate to 10-formyltetrahydrofolate. This is Bifunctional protein FolD from Chloroflexus aggregans (strain MD-66 / DSM 9485).